Reading from the N-terminus, the 189-residue chain is MGVTKKPDLNDPVLRAKLAKGMGHNYYGEPAWPNDLSYIFPVVILGTIACTIGLAVLEPSMIGEPANPFATPLEILPEWYLFPVFQILRTVPNQILRTVPNKLLGVLLMASVPAGSLTVPFLENVNQFQNPFRRPVATTVSLIGTAVALWLGIGAALPIDESLTLGLFQSNLIQLSNIKIFQIFFFSYI.

3 helical membrane passes run 36–56, 103–123, and 139–159; these read LSYI…GLAV, LLGV…PFLE, and TVSL…ALPI.

The protein belongs to the cytochrome b family. PetD subfamily. As to quaternary structure, the 4 large subunits of the cytochrome b6-f complex are cytochrome b6, subunit IV (17 kDa polypeptide, petD), cytochrome f and the Rieske protein, while the 4 small subunits are petG, petL, petM and petN. The complex functions as a dimer.

It is found in the plastid. It localises to the chloroplast thylakoid membrane. Its function is as follows. Component of the cytochrome b6-f complex, which mediates electron transfer between photosystem II (PSII) and photosystem I (PSI), cyclic electron flow around PSI, and state transitions. The polypeptide is Cytochrome b6-f complex subunit 4 (Pinus koraiensis (Korean pine)).